A 288-amino-acid polypeptide reads, in one-letter code: Phosphatidylserine decarboxylase proenzyme (288 aa).

Residues aspartate 90, histidine 147, and serine 254 each act as charge relay system; for autoendoproteolytic cleavage activity in the active site. The active-site Schiff-base intermediate with substrate; via pyruvic acid; for decarboxylase activity is serine 254. Serine 254 is modified (pyruvic acid (Ser); by autocatalysis).

The protein belongs to the phosphatidylserine decarboxylase family. PSD-B subfamily. Prokaryotic type I sub-subfamily. In terms of assembly, heterodimer of a large membrane-associated beta subunit and a small pyruvoyl-containing alpha subunit. It depends on pyruvate as a cofactor. Is synthesized initially as an inactive proenzyme. Formation of the active enzyme involves a self-maturation process in which the active site pyruvoyl group is generated from an internal serine residue via an autocatalytic post-translational modification. Two non-identical subunits are generated from the proenzyme in this reaction, and the pyruvate is formed at the N-terminus of the alpha chain, which is derived from the carboxyl end of the proenzyme. The autoendoproteolytic cleavage occurs by a canonical serine protease mechanism, in which the side chain hydroxyl group of the serine supplies its oxygen atom to form the C-terminus of the beta chain, while the remainder of the serine residue undergoes an oxidative deamination to produce ammonia and the pyruvoyl prosthetic group on the alpha chain. During this reaction, the Ser that is part of the protease active site of the proenzyme becomes the pyruvoyl prosthetic group, which constitutes an essential element of the active site of the mature decarboxylase.

Its subcellular location is the cell membrane. The catalysed reaction is a 1,2-diacyl-sn-glycero-3-phospho-L-serine + H(+) = a 1,2-diacyl-sn-glycero-3-phosphoethanolamine + CO2. The protein operates within phospholipid metabolism; phosphatidylethanolamine biosynthesis; phosphatidylethanolamine from CDP-diacylglycerol: step 2/2. Functionally, catalyzes the formation of phosphatidylethanolamine (PtdEtn) from phosphatidylserine (PtdSer). The chain is Phosphatidylserine decarboxylase proenzyme from Hamiltonella defensa subsp. Acyrthosiphon pisum (strain 5AT).